The following is a 376-amino-acid chain: RNA binding protein fox-1 homolog 1 (376 aa).

The tract at residues 1–126 is disordered; it reads MEEKGSRMVQ…QPKRLHVSNI (126 aa). Over residues 72–89 the composition is skewed to polar residues; sequence QTHSEQSPADTNAQTVSG. A compositionally biased stretch (low complexity) spans 90 to 101; the sequence is TATQTDDAAPTD. The span at 102-115 shows a compositional bias: polar residues; it reads GQPQTQPSENTENK. The RRM domain maps to 119-195; that stretch reads KRLHVSNIPF…RKIEVNNATA (77 aa). An Asymmetric dimethylarginine modification is found at Arg-319.

Binds to the C-terminus of ATXN2.

The protein localises to the nucleus. The protein resides in the cytoplasm. Its function is as follows. RNA-binding protein that regulates alternative splicing events by binding to 5'-UGCAUGU-3' elements. Prevents binding of U2AF2 to the 3'-splice site. Regulates alternative splicing of tissue-specific exons and of differentially spliced exons during erythropoiesis. This is RNA binding protein fox-1 homolog 1 (RBFOX1) from Macaca fascicularis (Crab-eating macaque).